A 1571-amino-acid polypeptide reads, in one-letter code: Pentafunctional AROM polypeptide (1571 aa).

Positions 1–380 (MTSVEKVSIL…YQLKAHQVSK (380 aa)) are 3-dehydroquinate synthase. NAD(+) is bound by residues 43 to 45 (DTN), 81 to 84 (ENNK), 112 to 114 (GGV), and aspartate 117. Position 128 (arginine 128) interacts with 7-phospho-2-dehydro-3-deoxy-D-arabino-heptonate. 137–138 (TS) serves as a coordination point for NAD(+). The 7-phospho-2-dehydro-3-deoxy-D-arabino-heptonate site is built by aspartate 144 and lysine 150. Lysine 159 provides a ligand contact to NAD(+). A 7-phospho-2-dehydro-3-deoxy-D-arabino-heptonate-binding site is contributed by asparagine 160. Residues 177-180 (FLET) and asparagine 188 contribute to the NAD(+) site. Glutamate 192 serves as a coordination point for Zn(2+). 7-phospho-2-dehydro-3-deoxy-D-arabino-heptonate is bound by residues 192–195 (EVVK) and lysine 244. Glutamate 254 acts as the Proton acceptor; for 3-dehydroquinate synthase activity in catalysis. 7-phospho-2-dehydro-3-deoxy-D-arabino-heptonate is bound by residues 258–262 (RNLLN) and histidine 265. Position 265 (histidine 265) interacts with Zn(2+). The active-site Proton acceptor; for 3-dehydroquinate synthase activity is the histidine 269. Histidine 281 and lysine 352 together coordinate 7-phospho-2-dehydro-3-deoxy-D-arabino-heptonate. Position 281 (histidine 281) interacts with Zn(2+). An EPSP synthase region spans residues 393–843 (VHPFDDKLIP…WDILHTKFKV (451 aa)). Cysteine 825 (for EPSP synthase activity) is an active-site residue. The shikimate kinase stretch occupies residues 868-1058 (KRSIIVIGMR…IPKKRSFYTS (191 aa)). 875–882 (GMRGAGKS) serves as a coordination point for ATP. The tract at residues 1059–1271 (LTFSDLTEVA…GNEGALDVAQ (213 aa)) is 3-dehydroquinase. Lysine 1204 serves as the catalytic Schiff-base intermediate with substrate; for 3-dehydroquinate dehydratase activity. The segment at 1284–1571 (EKHFWIVGNP…DVVHDAVVNQ (288 aa)) is shikimate dehydrogenase.

The protein in the N-terminal section; belongs to the sugar phosphate cyclases superfamily. Dehydroquinate synthase family. This sequence in the 2nd section; belongs to the EPSP synthase family. In the 3rd section; belongs to the shikimate kinase family. It in the 4th section; belongs to the type-I 3-dehydroquinase family. The protein in the C-terminal section; belongs to the shikimate dehydrogenase family. As to quaternary structure, homodimer. The cofactor is Zn(2+).

Its subcellular location is the cytoplasm. The enzyme catalyses 7-phospho-2-dehydro-3-deoxy-D-arabino-heptonate = 3-dehydroquinate + phosphate. It carries out the reaction 3-dehydroquinate = 3-dehydroshikimate + H2O. It catalyses the reaction shikimate + NADP(+) = 3-dehydroshikimate + NADPH + H(+). The catalysed reaction is shikimate + ATP = 3-phosphoshikimate + ADP + H(+). The enzyme catalyses 3-phosphoshikimate + phosphoenolpyruvate = 5-O-(1-carboxyvinyl)-3-phosphoshikimate + phosphate. The protein operates within metabolic intermediate biosynthesis; chorismate biosynthesis; chorismate from D-erythrose 4-phosphate and phosphoenolpyruvate: step 2/7. It participates in metabolic intermediate biosynthesis; chorismate biosynthesis; chorismate from D-erythrose 4-phosphate and phosphoenolpyruvate: step 3/7. Its pathway is metabolic intermediate biosynthesis; chorismate biosynthesis; chorismate from D-erythrose 4-phosphate and phosphoenolpyruvate: step 4/7. It functions in the pathway metabolic intermediate biosynthesis; chorismate biosynthesis; chorismate from D-erythrose 4-phosphate and phosphoenolpyruvate: step 5/7. The protein operates within metabolic intermediate biosynthesis; chorismate biosynthesis; chorismate from D-erythrose 4-phosphate and phosphoenolpyruvate: step 6/7. Its function is as follows. The AROM polypeptide catalyzes 5 consecutive enzymatic reactions in prechorismate polyaromatic amino acid biosynthesis. The chain is Pentafunctional AROM polypeptide from Scheffersomyces stipitis (strain ATCC 58785 / CBS 6054 / NBRC 10063 / NRRL Y-11545) (Yeast).